A 510-amino-acid chain; its full sequence is GMP synthase [glutamine-hydrolyzing] (510 aa).

Residues 5–195 (LVLILDFGGQ…LYEVCHCQGD (191 aa)) form the Glutamine amidotransferase type-1 domain. C82 acts as the Nucleophile in catalysis. Catalysis depends on residues H169 and E171. One can recognise a GMPS ATP-PPase domain in the interval 196–385 (WTMENYIEKE…LGVPEEIVWR (190 aa)). Residue 223–229 (SGGVDSS) coordinates ATP.

As to quaternary structure, homodimer.

The enzyme catalyses XMP + L-glutamine + ATP + H2O = GMP + L-glutamate + AMP + diphosphate + 2 H(+). The protein operates within purine metabolism; GMP biosynthesis; GMP from XMP (L-Gln route): step 1/1. Functionally, catalyzes the synthesis of GMP from XMP. This is GMP synthase [glutamine-hydrolyzing] from Alkaliphilus metalliredigens (strain QYMF).